The sequence spans 136 residues: MSARGKARSRALEVLFEAEQRSVSAFDAMTARREKTDLVINPYTVEIVEGVVSMQATIDEFLQTYAQGWTLERMPSVDRIILRIGAWELLYNDEVPDGVAVSEAVALAKTMSTDESPAFINGLLGRLQKLKPSLLA.

Belongs to the NusB family.

Functionally, involved in transcription antitermination. Required for transcription of ribosomal RNA (rRNA) genes. Binds specifically to the boxA antiterminator sequence of the ribosomal RNA (rrn) operons. The polypeptide is Transcription antitermination protein NusB (Paenarthrobacter aurescens (strain TC1)).